The chain runs to 357 residues: Quinolinate synthase (357 aa).

2 residues coordinate iminosuccinate: histidine 50 and serine 71. Cysteine 116 serves as a coordination point for [4Fe-4S] cluster. Iminosuccinate-binding positions include 142–144 (YAN) and serine 159. Cysteine 203 lines the [4Fe-4S] cluster pocket. Iminosuccinate is bound by residues 229–231 (HPE) and threonine 246. Residue cysteine 300 participates in [4Fe-4S] cluster binding.

It belongs to the quinolinate synthase family. Type 1 subfamily. [4Fe-4S] cluster is required as a cofactor.

Its subcellular location is the cytoplasm. The enzyme catalyses iminosuccinate + dihydroxyacetone phosphate = quinolinate + phosphate + 2 H2O + H(+). It functions in the pathway cofactor biosynthesis; NAD(+) biosynthesis; quinolinate from iminoaspartate: step 1/1. Its function is as follows. Catalyzes the condensation of iminoaspartate with dihydroxyacetone phosphate to form quinolinate. This chain is Quinolinate synthase, found in Shewanella sp. (strain ANA-3).